The primary structure comprises 360 residues: Threonine synthase (360 aa).

Lysine 69 carries the N6-(pyridoxal phosphate)lysine modification. Pyridoxal 5'-phosphate is bound by residues asparagine 95, 196-200, and threonine 326; that span reads GNAGN.

The protein belongs to the threonine synthase family. Homodimer. Pyridoxal 5'-phosphate serves as cofactor.

The catalysed reaction is O-phospho-L-homoserine + H2O = L-threonine + phosphate. Its pathway is amino-acid biosynthesis; L-threonine biosynthesis; L-threonine from L-aspartate: step 5/5. Its function is as follows. Catalyzes the gamma-elimination of phosphate from L-phosphohomoserine and the beta-addition of water to produce L-threonine. The protein is Threonine synthase (thrC) of Mycobacterium bovis (strain ATCC BAA-935 / AF2122/97).